Consider the following 449-residue polypeptide: Histidinol dehydrogenase (449 aa).

Positions 136, 204, and 232 each coordinate NAD(+). The substrate site is built by threonine 255, glutamine 277, and histidine 280. 2 residues coordinate Zn(2+): glutamine 277 and histidine 280. Active-site proton acceptor residues include glutamate 346 and histidine 347. Histidine 347, aspartate 380, glutamate 434, and histidine 439 together coordinate substrate. Aspartate 380 serves as a coordination point for Zn(2+). Histidine 439 provides a ligand contact to Zn(2+).

The protein belongs to the histidinol dehydrogenase family. Requires Zn(2+) as cofactor.

The enzyme catalyses L-histidinol + 2 NAD(+) + H2O = L-histidine + 2 NADH + 3 H(+). It participates in amino-acid biosynthesis; L-histidine biosynthesis; L-histidine from 5-phospho-alpha-D-ribose 1-diphosphate: step 9/9. Functionally, catalyzes the sequential NAD-dependent oxidations of L-histidinol to L-histidinaldehyde and then to L-histidine. In Mycobacterium leprae (strain TN), this protein is Histidinol dehydrogenase (hisD).